Consider the following 278-residue polypeptide: MNNADLYRKSNSLQKRDALRCLEEHANKIKWKKIGDRVIDLGCADGSVTDILKVYMPKNYGRLVGCDISEEMVKYANKHHGFGRTSFRVLDIEGDLTADLKQGFDHVFSFYTLHWIRDQERAFRNIFNLLGDEGDCLLLFLGHTPIFDVYRTLSHTEKWHSWLEHVDRFISPYHDNEDPEKEVKKIMERVGFSNIEVQCKTLFYVYDDLDVLKKSVAAINPFNIPKDILEDFLEDYIDVVREMRLLDRCNNNVGESVSIKFNYKVISVYARKLCLSLM.

It belongs to the methyltransferase superfamily. As to expression, specifically expressed in the corpora allata (CA).

It catalyses the reaction (2E,6E)-farnesoate + S-adenosyl-L-methionine = methyl (2E,6E)-farnesoate + S-adenosyl-L-homocysteine. The enzyme catalyses juvenile hormone III carboxylate + S-adenosyl-L-methionine = juvenile hormone III + S-adenosyl-L-homocysteine. Its function is as follows. O-methyltransferase that transfers a methyl group from S-adenosyl-L-methionine (SAM) to the carboxyl group of juvenile hormone acids to produce active juvenile hormones in the corpora allata, the last step during juvenile hormone biosynthesis. Also able to methylate farnesoate to methyl farnesoate. This Bombyx mori (Silk moth) protein is Juvenile hormone acid O-methyltransferase.